Reading from the N-terminus, the 100-residue chain is Urease subunit gamma (100 aa).

Belongs to the urease gamma subunit family. In terms of assembly, heterotrimer of UreA (gamma), UreB (beta) and UreC (alpha) subunits. Three heterotrimers associate to form the active enzyme.

It is found in the cytoplasm. It catalyses the reaction urea + 2 H2O + H(+) = hydrogencarbonate + 2 NH4(+). It functions in the pathway nitrogen metabolism; urea degradation; CO(2) and NH(3) from urea (urease route): step 1/1. This chain is Urease subunit gamma, found in Rhizobium rhizogenes (strain K84 / ATCC BAA-868) (Agrobacterium radiobacter).